We begin with the raw amino-acid sequence, 381 residues long: Chitin deacetylase 8 (381 aa).

The N-terminal stretch at 1–18 (MKRLSVLCSLLLVAAALG) is a signal peptide. Intrachain disulfides connect cysteine 27–cysteine 39 and cysteine 32–cysteine 37. Zn(2+) is bound by residues aspartate 63, histidine 117, and histidine 121. 5 cysteine pairs are disulfide-bonded: cysteine 86/cysteine 335, cysteine 211/cysteine 216, cysteine 240/cysteine 246, cysteine 343/cysteine 365, and cysteine 348/cysteine 368. An N-linked (GlcNAc...) asparagine glycan is attached at asparagine 171.

The protein belongs to the carbohydrate esterase 4 (CE4) family. Zn(2+) is required as a cofactor. Strongly expressed in the midgut. Has little or no expression in other tissues tested.

The protein localises to the secreted. The catalysed reaction is [(1-&gt;4)-N-acetyl-beta-D-glucosaminyl](n) + n H2O = chitosan + n acetate. Hydrolyzes the N-acetamido groups of N-acetyl-D-glucosamine (GlcNAc) residues in chitin. Shows activity towards the chitinous oligomers GlcNAc(3), GlcNAc(4), GlcNAc(5) and GlcNAc(6), but not GlcNAc or GlcNAc(2). Requires the substrate to occupy subsites 0, +1, and +2 for optimum catalysis. This Bombyx mori (Silk moth) protein is Chitin deacetylase 8.